A 415-amino-acid polypeptide reads, in one-letter code: Serine hydroxymethyltransferase (415 aa).

(6S)-5,6,7,8-tetrahydrofolate contacts are provided by residues Leu-121 and 125–127; that span reads GHL. Residue Lys-230 is modified to N6-(pyridoxal phosphate)lysine. Residue 355–357 coordinates (6S)-5,6,7,8-tetrahydrofolate; it reads SPF.

The protein belongs to the SHMT family. Homodimer. The cofactor is pyridoxal 5'-phosphate.

The protein resides in the cytoplasm. It catalyses the reaction (6R)-5,10-methylene-5,6,7,8-tetrahydrofolate + glycine + H2O = (6S)-5,6,7,8-tetrahydrofolate + L-serine. It functions in the pathway one-carbon metabolism; tetrahydrofolate interconversion. The protein operates within amino-acid biosynthesis; glycine biosynthesis; glycine from L-serine: step 1/1. Functionally, catalyzes the reversible interconversion of serine and glycine with tetrahydrofolate (THF) serving as the one-carbon carrier. This reaction serves as the major source of one-carbon groups required for the biosynthesis of purines, thymidylate, methionine, and other important biomolecules. Also exhibits THF-independent aldolase activity toward beta-hydroxyamino acids, producing glycine and aldehydes, via a retro-aldol mechanism. This Lactococcus lactis subsp. lactis (strain IL1403) (Streptococcus lactis) protein is Serine hydroxymethyltransferase.